Here is a 1461-residue protein sequence, read N- to C-terminus: Autotransporter adhesin SadA (1461 aa).

An N-terminal signal peptide occupies residues Met-1–Ala-54. The segment at Asn-55–Lys-1372 is surface exposed passenger domain. The translocator domain stretch occupies residues Met-1373–Trp-1461. The next 4 beta stranded transmembrane spans lie at Gly-1407–Thr-1417, Glu-1421–Val-1431, Lys-1440–Asn-1446, and Asp-1450–Trp-1461.

This sequence belongs to the autotransporter-2 (AT-2) (TC 1.B.40) family. In terms of assembly, homotrimer.

The protein localises to the cell surface. Its subcellular location is the cell outer membrane. Involved in cell aggregation, biofilm formation, and adhesion to human intestinal epithelial cells. This chain is Autotransporter adhesin SadA, found in Salmonella typhimurium (strain LT2 / SGSC1412 / ATCC 700720).